A 270-amino-acid chain; its full sequence is Elongation factor Ts (270 aa).

The tract at residues 76-79 is involved in Mg(2+) ion dislocation from EF-Tu; sequence TDFV.

The protein belongs to the EF-Ts family.

Its subcellular location is the cytoplasm. Functionally, associates with the EF-Tu.GDP complex and induces the exchange of GDP to GTP. It remains bound to the aminoacyl-tRNA.EF-Tu.GTP complex up to the GTP hydrolysis stage on the ribosome. The chain is Elongation factor Ts from Corynebacterium aurimucosum (strain ATCC 700975 / DSM 44827 / CIP 107346 / CN-1) (Corynebacterium nigricans).